The chain runs to 675 residues: Heat shock 70 kDa protein 12A (675 aa).

The tract at residues 1 to 45 (MADKEAGGGDAGPRETAPTSTYSSPARSLGDTGITPLSPSHILND) is disordered. The residue at position 2 (A2) is an N-acetylalanine. Polar residues predominate over residues 17–26 (APTSTYSSPA).

The protein belongs to the heat shock protein 70 family. As to quaternary structure, interacts with SORL1 (via cytosolic C-terminus); this interaction affects SORL1 internalization and subcellular localization. In terms of tissue distribution, expressed most strongly in brain, kidney and heart with little or no expression in other tissues. In the brain, expressed in glial cells, including astrocytes (at protein level). In the aorta, preferentially expressed in lesions.

The protein localises to the cytoplasm. The protein resides in the nucleus. Its function is as follows. Adapter protein for SORL1, but not SORT1. Delays SORL1 internalization and affects SORL1 subcellular localization. This is Heat shock 70 kDa protein 12A (Hspa12a) from Mus musculus (Mouse).